The chain runs to 204 residues: NADH-ubiquinone oxidoreductase subunit 9 (204 aa).

Belongs to the complex I 30 kDa subunit family. In terms of assembly, complex I is composed of about 30 different subunits.

Its subcellular location is the mitochondrion inner membrane. It catalyses the reaction a ubiquinone + NADH + 5 H(+)(in) = a ubiquinol + NAD(+) + 4 H(+)(out). In terms of biological role, core subunit of the mitochondrial membrane respiratory chain NADH dehydrogenase (Complex I) that is believed to belong to the minimal assembly required for catalysis. Complex I functions in the transfer of electrons from NADH to the respiratory chain. The immediate electron acceptor for the enzyme is believed to be ubiquinone. In Reclinomonas americana, this protein is NADH-ubiquinone oxidoreductase subunit 9 (NAD9).